Consider the following 458-residue polypeptide: Flavohemoprotein (458 aa).

Positions 2 to 158 constitute a Globin domain; that stretch reads TLSEDTLRAV…LADLFIKREE (157 aa). A heme b-binding site is contributed by H107. Catalysis depends on charge relay system residues Y117 and E157. The tract at residues 169 to 457 is reductase; the sequence is GGWRQTRTFR…FEMFGPFKAS (289 aa). An FAD-binding FR-type domain is found at 172–279; the sequence is RQTRTFRVEE…APPYGDFFLR (108 aa). FAD-binding positions include Y211 and 228-231; that span reads RQYS. Residue 321–326 coordinates NADP(+); that stretch reads GIGQTP. 450-453 serves as a coordination point for FAD; sequence MFGP.

It belongs to the globin family. Two-domain flavohemoproteins subfamily. In the C-terminal section; belongs to the flavoprotein pyridine nucleotide cytochrome reductase family. Monomer. Requires heme b as cofactor. It depends on FAD as a cofactor.

The enzyme catalyses 2 nitric oxide + NADPH + 2 O2 = 2 nitrate + NADP(+) + H(+). It carries out the reaction 2 nitric oxide + NADH + 2 O2 = 2 nitrate + NAD(+) + H(+). Flavohemoprotein involved in nitric oxide (NO) detoxification in an aerobic process, termed nitric oxide dioxygenase (NOD) reaction that utilizes O(2) and NAD(P)H to convert NO to nitrate, which protects the protozoan parasite from various noxious nitrogen compounds. Therefore, plays a central role in the inducible response to nitrosative stress. May also be involved in O(2) detoxification. The chain is Flavohemoprotein (hmpA) from Giardia intestinalis (strain ATCC 50803 / WB clone C6) (Giardia lamblia).